We begin with the raw amino-acid sequence, 115 residues long: Ustilagic acid biosynthesis cluster protein orf3 (115 aa).

A signal peptide spans 1–38 (MTYSKIACSLGKRGIARAPNQASSFFLLLFLFAKFSQQ). Positions 42-62 (SPCLASSGVAKSRGPASTDRP) are disordered.

Its pathway is secondary metabolite biosynthesis. Part of the gene cluster that mediates the biosynthesis of the glycolipid biosurfactant ustilagic acid (UA). UA is a secreted cellobiose glycolipid that is toxic for many microorganisms and confers biocontrol activity to U.maydis. UA consists of 15,16-dihydroxypalmitic or 2,15,16-trihydroxypalmitic acid, which is O-glycosidically linked to cellobiose at its terminal hydroxyl group. In addition, the cellobiose moiety is acetylated and acylated with a short-chain hydroxy fatty acid. UA biosynthesis starts with omega-hydroxylation of palmitic acid catalyzed by the cytochrome P450 monooxygenase cyp1. Terminal hydroxylation of palmitic acid precedes subterminal hydroxylation catalyzed by the cytochrome P450 monooxygenase cyp2. Sequential glucosylation of the hydroxy fatty acid is probably catalyzed by the glycosyltransferase ugt1. The cellobiose lipid is further decorated by acetylation of the proximal glucose residue and by acylation with a short-chain beta-hydroxy fatty acid at the distal glucose residue. The acyltransferase uat1 may be a good candidate for catalyzing either acetylation or acylation of the cellobiose lipid. The fatty acid synthase fas2 may be involved in synthesis of the carbon backbone of the short-chain beta-hydroxy fatty acid esterified to the cellobiose disaccharide. The secreted UA consists of a mixture of both alpha-hydroxylated and non-hydroxylated glycolipids; therefore, alpha-hydroxylation of the long-chain fatty, catalyzed by the fatty acid hydroxylase ahd1, occurs late in UA biosynthesis and may be the last step before secretion. In Mycosarcoma maydis (Corn smut fungus), this protein is Ustilagic acid biosynthesis cluster protein orf3.